Here is a 222-residue protein sequence, read N- to C-terminus: RNA chaperone ProQ (222 aa).

Positions 94 to 113 are enriched in basic and acidic residues; the sequence is EHADHAKQQLDESKAKAAEK. Residues 94–171 form a disordered region; that stretch reads EHADHAKQQL…PAKLTDSDLQ (78 aa). Basic residues predominate over residues 114–131; that stretch reads RKAKLAQQPKRKDKRQFN. Positions 133–148 are enriched in basic and acidic residues; the sequence is PKGEKSANSDHADTKR. Over residues 155–164 the composition is skewed to low complexity; the sequence is NRPNTTPPAK.

Belongs to the ProQ family.

The protein resides in the cytoplasm. Functionally, RNA chaperone with significant RNA binding, RNA strand exchange and RNA duplexing activities. The polypeptide is RNA chaperone ProQ (Alteromonas mediterranea (strain DSM 17117 / CIP 110805 / LMG 28347 / Deep ecotype)).